We begin with the raw amino-acid sequence, 1392 residues long: ABC transporter G family member 42 (1392 aa).

The segment covering Met-1–Glu-18 has biased composition (polar residues). The tract at residues Met-1–Gln-26 is disordered. Residues Ser-139–Asn-413 enclose the ABC transporter 1 domain. Gly-173–Thr-180 lines the ATP pocket. The 213-residue stretch at Asp-491–Phe-703 folds into the ABC transmembrane type-2 1 domain. The next 6 membrane-spanning stretches (helical) occupy residues Phe-509–Tyr-529, Tyr-543–Leu-563, Ile-596–Tyr-616, Phe-627–Val-647, Val-652–Ile-672, and Phe-739–Phe-759. The region spanning Phe-800–Gly-1045 is the ABC transporter 2 domain. Gly-837–Thr-844 contacts ATP. Residues Glu-1117–Tyr-1331 form the ABC transmembrane type-2 2 domain. Transmembrane regions (helical) follow at residues Tyr-1136–Trp-1156, Met-1175–Ala-1195, Tyr-1215–Ile-1237, Phe-1255–Val-1275, Ile-1281–Met-1301, Trp-1309–Ser-1329, and Leu-1364–Ile-1384.

It belongs to the ABC transporter superfamily. ABCG family. PDR (TC 3.A.1.205) subfamily. As to expression, confined to shoots.

The protein resides in the membrane. Functionally, may be a general defense protein. This chain is ABC transporter G family member 42 (ABCG42), found in Arabidopsis thaliana (Mouse-ear cress).